A 221-amino-acid chain; its full sequence is Transmembrane protein 267 (221 aa).

The next 5 helical transmembrane spans lie at 28-48 (ASAG…LPFI), 57-77 (LFDN…VIGL), 86-106 (VILA…MAGS), 121-141 (LHCS…MWAC), and 182-204 (ISYW…LMYL).

It localises to the membrane. In Danio rerio (Zebrafish), this protein is Transmembrane protein 267 (tmem267).